The chain runs to 175 residues: Small ribosomal subunit protein uS4 (175 aa).

Positions 105 to 169 (RRLQTIVYRQ…SPLADSLHPA (65 aa)) constitute an S4 RNA-binding domain.

This sequence belongs to the universal ribosomal protein uS4 family. In terms of assembly, part of the 30S ribosomal subunit. Contacts protein S5. The interaction surface between S4 and S5 is involved in control of translational fidelity.

One of the primary rRNA binding proteins, it binds directly to 16S rRNA where it nucleates assembly of the body of the 30S subunit. Its function is as follows. With S5 and S12 plays an important role in translational accuracy. In Haloquadratum walsbyi (strain DSM 16790 / HBSQ001), this protein is Small ribosomal subunit protein uS4.